Consider the following 523-residue polypeptide: 2-isopropylmalate synthase (523 aa).

In terms of domain architecture, Pyruvate carboxyltransferase spans 5–267 (VIIFDTTLRD…HTNINHHEIW (263 aa)). 4 residues coordinate Mn(2+): Asp14, His202, His204, and Asn238. The regulatory domain stretch occupies residues 392 to 523 (RLDYFSVQSG…QNKENNKETV (132 aa)).

Belongs to the alpha-IPM synthase/homocitrate synthase family. LeuA type 1 subfamily. As to quaternary structure, homodimer. The cofactor is Mn(2+).

It localises to the cytoplasm. The enzyme catalyses 3-methyl-2-oxobutanoate + acetyl-CoA + H2O = (2S)-2-isopropylmalate + CoA + H(+). It participates in amino-acid biosynthesis; L-leucine biosynthesis; L-leucine from 3-methyl-2-oxobutanoate: step 1/4. Functionally, catalyzes the condensation of the acetyl group of acetyl-CoA with 3-methyl-2-oxobutanoate (2-ketoisovalerate) to form 3-carboxy-3-hydroxy-4-methylpentanoate (2-isopropylmalate). This chain is 2-isopropylmalate synthase, found in Salmonella choleraesuis (strain SC-B67).